The following is a 466-amino-acid chain: MGQSSQPHELGGGLKSRHVTMLSIAGVIGASLFVGSSVAIAEAGPAVLLAYLFAGLLVVMIMRMLAEMAVATPDTGSFSTYADKAIGRWAGYTIGWLYWWFWVLVIPLEANIAAMILHSWVPGIPIWLFSLVITLALTGSNLLSVKNYGEFEFWLALCKVIAILAFIFLGAVAISGFYPYAEVSGISRLWDSGGFMPNGFGAVLSAMLITMFSFMGAEIVTIAAAESDTPEKHIVRATNSVIWRISIFYLCSIFVVVALIPWNMPGLKAVGSYRSVLELLNIPHAKLIMDCVILLSVTSCLNSALYTASRMLYSLSRRGDAPAVMGKINRSKTPYVAVLLSTGAAFLTVVVNYYAPAKVFKFLIDSSGAIALLVYLVIAVSQLRMRKILRAEGSEIRLRMWLYPWLTWLVIGFITFVLVVMLFRPAQQLEVISTGLLAIGIICTVPIMARWKKLVLWQKTPVHNTR.

The Cytoplasmic segment spans residues 2 to 20 (GQSSQPHELGGGLKSRHVT). 2 consecutive transmembrane segments (helical) span residues 21–41 (MLSIAGVIGASLFVGSSVAIA) and 42–62 (EAGPAVLLAYLFAGLLVVMIM). The Cytoplasmic portion of the chain corresponds to 63 to 96 (RMLAEMAVATPDTGSFSTYADKAIGRWAGYTIGW). The helical transmembrane segment at 97-117 (LYWWFWVLVIPLEANIAAMIL) threads the bilayer. Position 118 (His118) is a topological domain, periplasmic. The helical transmembrane segment at 119 to 139 (SWVPGIPIWLFSLVITLALTG) threads the bilayer. Topologically, residues 140–153 (SNLLSVKNYGEFEF) are cytoplasmic. Residues 154 to 174 (WLALCKVIAILAFIFLGAVAI) form a helical membrane-spanning segment. The Periplasmic portion of the chain corresponds to 175–199 (SGFYPYAEVSGISRLWDSGGFMPNG). The helical transmembrane segment at 200–220 (FGAVLSAMLITMFSFMGAEIV) threads the bilayer. Topologically, residues 221-246 (TIAAAESDTPEKHIVRATNSVIWRIS) are cytoplasmic. A helical membrane pass occupies residues 247–267 (IFYLCSIFVVVALIPWNMPGL). Over 268–286 (KAVGSYRSVLELLNIPHAK) the chain is Periplasmic. The chain crosses the membrane as a helical span at residues 287-307 (LIMDCVILLSVTSCLNSALYT). Topologically, residues 308–334 (ASRMLYSLSRRGDAPAVMGKINRSKTP) are cytoplasmic. The chain crosses the membrane as a helical span at residues 335–355 (YVAVLLSTGAAFLTVVVNYYA). Residues 356 to 358 (PAK) are Periplasmic-facing. A helical transmembrane segment spans residues 359–379 (VFKFLIDSSGAIALLVYLVIA). The Cytoplasmic portion of the chain corresponds to 380 to 402 (VSQLRMRKILRAEGSEIRLRMWL). The helical transmembrane segment at 403-423 (YPWLTWLVIGFITFVLVVMLF) threads the bilayer. The Periplasmic portion of the chain corresponds to 424–428 (RPAQQ). Residues 429–449 (LEVISTGLLAIGIICTVPIMA) form a helical membrane-spanning segment. Over 450–466 (RWKKLVLWQKTPVHNTR) the chain is Cytoplasmic.

The protein belongs to the amino acid-polyamine-organocation (APC) superfamily. Amino acid transporter (AAT) (TC 2.A.3.1) family. Monomer.

The protein resides in the cell inner membrane. The enzyme catalyses 4-aminobutanoate(in) + H(+)(in) = 4-aminobutanoate(out) + H(+)(out). The protein operates within amino-acid degradation; 4-aminobutanoate degradation. Its activity is regulated as follows. Uptake is stimulated by ammonium sulfate and abolished by 2,4-dinitrophenol. Is affected both topologically and kinetically by phospholipid composition of the membrane. In cells lacking phosphatidylethanolamine (PE), the N-terminal hairpin is inverted relative to the membrane and the rate of GABA transport is reduced by more than 99%. In terms of biological role, transporter for gamma-aminobutyrate (GABA). Transport is driven by the membrane potential. Can also transport a number of GABA analogs such as nipecotic acid or muscimol. This is Gamma-aminobutyric acid permease from Escherichia coli (strain K12).